The following is a 665-amino-acid chain: DNA ligase (665 aa).

NAD(+) is bound by residues 32–36 (DSEYD), 81–82 (SL), and Glu110. The active-site N6-AMP-lysine intermediate is the Lys112. Arg133, Glu167, Lys283, and Lys307 together coordinate NAD(+). 4 residues coordinate Zn(2+): Cys401, Cys404, Cys419, and Cys424. The BRCT domain occupies 586-665 (EGHPDFSGKT…AAFIEKQNGI (80 aa)).

This sequence belongs to the NAD-dependent DNA ligase family. LigA subfamily. Mg(2+) is required as a cofactor. The cofactor is Mn(2+).

It catalyses the reaction NAD(+) + (deoxyribonucleotide)n-3'-hydroxyl + 5'-phospho-(deoxyribonucleotide)m = (deoxyribonucleotide)n+m + AMP + beta-nicotinamide D-nucleotide.. Its function is as follows. DNA ligase that catalyzes the formation of phosphodiester linkages between 5'-phosphoryl and 3'-hydroxyl groups in double-stranded DNA using NAD as a coenzyme and as the energy source for the reaction. It is essential for DNA replication and repair of damaged DNA. The sequence is that of DNA ligase from Staphylococcus epidermidis (strain ATCC 12228 / FDA PCI 1200).